The following is a 426-amino-acid chain: Methionine aminopeptidase 2 (426 aa).

The disordered stretch occupies residues methionine 1 to glycine 72. Residues threonine 10–glutamate 34 show a composition bias toward basic and acidic residues. Residues lysine 47–lysine 60 are compositionally biased toward basic residues. Histidine 179 provides a ligand contact to substrate. Positions 199, 210, and 279 each coordinate a divalent metal cation. Histidine 287 lines the substrate pocket. Positions 312 and 407 each coordinate a divalent metal cation.

The protein belongs to the peptidase M24A family. Methionine aminopeptidase eukaryotic type 2 subfamily. Co(2+) is required as a cofactor. Zn(2+) serves as cofactor. It depends on Mn(2+) as a cofactor. The cofactor is Fe(2+).

The protein localises to the cytoplasm. The catalysed reaction is Release of N-terminal amino acids, preferentially methionine, from peptides and arylamides.. In terms of biological role, cotranslationally removes the N-terminal methionine from nascent proteins. The N-terminal methionine is often cleaved when the second residue in the primary sequence is small and uncharged (Met-Ala-, Cys, Gly, Pro, Ser, Thr, or Val). The polypeptide is Methionine aminopeptidase 2 (fma2) (Schizosaccharomyces pombe (strain 972 / ATCC 24843) (Fission yeast)).